The chain runs to 190 residues: NADH-ubiquinone oxidoreductase 75 kDa subunit, mitochondrial (190 aa).

It belongs to the complex I 75 kDa subunit family. As to quaternary structure, core subunit of respiratory chain NADH dehydrogenase (Complex I) which is composed of 45 different subunits. This is the largest subunit of complex I and it is a component of the iron-sulfur (IP) fragment of the enzyme. Complex I associates with ubiquinol-cytochrome reductase complex (Complex III) to form supercomplexes. Interacts with MDM2 and AKAP1. It depends on [2Fe-2S] cluster as a cofactor. [4Fe-4S] cluster serves as cofactor.

Its subcellular location is the mitochondrion inner membrane. It carries out the reaction a ubiquinone + NADH + 5 H(+)(in) = a ubiquinol + NAD(+) + 4 H(+)(out). In terms of biological role, core subunit of the mitochondrial membrane respiratory chain NADH dehydrogenase (Complex I) which catalyzes electron transfer from NADH through the respiratory chain, using ubiquinone as an electron acceptor. Essential for catalysing the entry and efficient transfer of electrons within complex I. Plays a key role in the assembly and stability of complex I and participates in the association of complex I with ubiquinol-cytochrome reductase complex (Complex III) to form supercomplexes. The protein is NADH-ubiquinone oxidoreductase 75 kDa subunit, mitochondrial of Mesocricetus auratus (Golden hamster).